The sequence spans 146 residues: Pre-mRNA-splicing factor cwf14 (146 aa).

Belongs to the BUD31 (G10) family. In terms of assembly, belongs to the 40S cdc5-associated complex (or cwf complex), a spliceosome sub-complex reminiscent of a late-stage spliceosome composed of the U2, U5 and U6 snRNAs and at least brr2, cdc5, cwf2/prp3, cwf3/syf1, cwf4/syf3, cwf5/ecm2, spp42/cwf6, cwf7/spf27, cwf8, cwf9, cwf10, cwf11, cwf12, prp45/cwf13, cwf14, cwf15, cwf16, cwf17, cwf18, cwf19, cwf20, cwf21, cwf22, cwf23, cwf24, cwf25, cwf26, cyp7/cwf27, cwf28, cwf29/ist3, lea1, msl1, prp5/cwf1, prp10, prp12/sap130, prp17, prp22, sap61, sap62, sap114, sap145, slu7, smb1, smd1, smd3, smf1, smg1 and syf2.

It is found in the nucleus. Functionally, involved in mRNA splicing where it associates with cdc5 and the other cwf proteins as part of the spliceosome. The polypeptide is Pre-mRNA-splicing factor cwf14 (cwf14) (Schizosaccharomyces pombe (strain 972 / ATCC 24843) (Fission yeast)).